The primary structure comprises 80 residues: Metallothionein-like protein 2B (80 aa).

The protein belongs to the metallothionein superfamily. Type 15 family. In terms of tissue distribution, highly expressed in stems. Expressed in leaves and rachis.

Its function is as follows. Metallothioneins have a high content of cysteine residues that bind various heavy metals. In Oryza sativa subsp. japonica (Rice), this protein is Metallothionein-like protein 2B (MT2B).